We begin with the raw amino-acid sequence, 162 residues long: Interleukin-15 (162 aa).

A signal peptide spans 1–29; sequence MRILKPYLRSTSIQCYLCLLLNSHFLTEA. The propeptide occupies 30 to 48; it reads GIHVFILGCISAGLPKTEA. Cystine bridges form between C83-C133 and C90-C136. N-linked (GlcNAc...) asparagine glycans are attached at residues N113, N121, and N127.

It belongs to the IL-15/IL-21 family.

The protein localises to the secreted. In terms of biological role, cytokine that plays a major role in the development of inflammatory and protective immune responses to microbial invaders and parasites by modulating immune cells of both the innate and adaptive immune systems. Stimulates the proliferation of natural killer cells, T-cells and B-cells and promotes the secretion of several cytokines. In monocytes, induces the production of IL8 and monocyte chemotactic protein 1/CCL2, two chemokines that attract neutrophils and monocytes respectively to sites of infection. Unlike most cytokines, which are secreted in soluble form, IL15 is expressed in association with its high affinity IL15RA on the surface of IL15-producing cells and delivers signals to target cells that express IL2RB and IL2RG receptor subunits. Binding to its receptor triggers the phosphorylation of JAK1 and JAK3 and the recruitment and subsequent phosphorylation of signal transducer and activator of transcription-3/STAT3 and STAT5. In mast cells, induces the rapid tyrosine phosphorylation of STAT6 and thereby controls mast cell survival and release of cytokines such as IL4. The chain is Interleukin-15 (IL15) from Bubalus bubalis (Domestic water buffalo).